The chain runs to 296 residues: Mitochondrial arginine transporter BAC2 (296 aa).

3 Solcar repeats span residues 13–93 (GREF…FSRS), 104–187 (PSYR…VRER), and 198–282 (ENLR…ALRC). The next 6 helical transmembrane spans lie at 16–36 (FVAG…LDTL), 70–90 (AAPL…YAIF), 110–130 (ALGG…VELI), 162–181 (GLTI…FWTY), 204–224 (LVAG…LDVV), and 260–280 (TAVA…EVAL).

Belongs to the mitochondrial carrier (TC 2.A.29) family. In terms of tissue distribution, high expression in flowers, stamens, petals and pollen. Expressed in roots, leaves and stems.

It is found in the mitochondrion inner membrane. With respect to regulation, inhibited by mercuric chloride. Mitochondrial arginine transporter that catalyzes the counter-exchange of arginine with lysine, ornithine, arginine, histidine and citrulline. Substrate preference in reconstituted proteoliposomes is arginine &gt; homoarginine &gt; citrulline &gt; histidine &gt; lysine &gt; ornithine. May be involved in the delivery of arginine, released from seed reserves, to mitochondrial arginase and the export of ornithine. May contribute to proline accumulation in response to hyperosmotic stress. This chain is Mitochondrial arginine transporter BAC2 (BAC2), found in Arabidopsis thaliana (Mouse-ear cress).